The chain runs to 499 residues: Chaperone SurA (499 aa).

A signal peptide spans 1 to 36; it reads MKRQEFALFSLTLMLSPWRRVLLPAVLAAMAGPALA. 2 consecutive PpiC domains span residues 231-333 and 352-450; these read PTEF…KLTA and ITQT…QVEN.

The protein resides in the periplasm. It carries out the reaction [protein]-peptidylproline (omega=180) = [protein]-peptidylproline (omega=0). Functionally, chaperone involved in the correct folding and assembly of outer membrane proteins. Recognizes specific patterns of aromatic residues and the orientation of their side chains, which are found more frequently in integral outer membrane proteins. May act in both early periplasmic and late outer membrane-associated steps of protein maturation. The sequence is that of Chaperone SurA from Cupriavidus pinatubonensis (strain JMP 134 / LMG 1197) (Cupriavidus necator (strain JMP 134)).